Reading from the N-terminus, the 1068-residue chain is Phosphatidylinositol 4,5-bisphosphate 3-kinase catalytic subunit alpha isoform (1068 aa).

Residues 16–105 (MPPRILVECL…QPFLKVIEPV (90 aa)) form the PI3K-ABD domain. A PI3K-RBD domain is found at 187–289 (KGQIIVVIWV…GRMPNLMLMA (103 aa)). One can recognise a C2 PI3K-type domain in the interval 330–487 (INSALRIKIL…DWFSSVVKFP (158 aa)). In terms of domain architecture, PIK helical spans 517-694 (LARDNELREN…GLLLESYCRA (178 aa)). The 287-residue stretch at 765 to 1051 (RLEECRIMSS…QMNDAHHGGW (287 aa)) folds into the PI3K/PI4K catalytic domain. Residues 771 to 777 (IMSSAKR) form a G-loop region. The catalytic loop stretch occupies residues 912–920 (GIGDRHNSN). Residues 931 to 957 (HIDFGHFLDHKKKKFGYKRERVPFVLT) are activation loop.

This sequence belongs to the PI3/PI4-kinase family. In terms of assembly, heterodimer of a catalytic subunit PIK3CA and a p85 regulatory subunit (PIK3R1, PIK3R2 or PIK3R3). Interacts with IRS1 in nuclear extracts. Interacts with RUFY3. Interacts with RASD2. Interacts with APPL1. Interacts with HRAS and KRAS. Interaction with HRAS/KRAS is required for PI3K pathway signaling and cell proliferation stimulated by EGF and FGF2. Interacts with FAM83B; activates the PI3K/AKT signaling cascade.

The catalysed reaction is a 1,2-diacyl-sn-glycero-3-phospho-(1D-myo-inositol-4,5-bisphosphate) + ATP = a 1,2-diacyl-sn-glycero-3-phospho-(1D-myo-inositol-3,4,5-trisphosphate) + ADP + H(+). The enzyme catalyses a 1,2-diacyl-sn-glycero-3-phospho-(1D-myo-inositol) + ATP = a 1,2-diacyl-sn-glycero-3-phospho-(1D-myo-inositol-3-phosphate) + ADP + H(+). It carries out the reaction L-seryl-[protein] + ATP = O-phospho-L-seryl-[protein] + ADP + H(+). It catalyses the reaction 1,2-dioctanoyl-sn-glycero-3-phospho-(1D-myo-inositol-4,5-bisphosphate) + ATP = 1,2-dioctanoyl-sn-glycero-3-phospho-(1D-myo-inositol-3,4,5-trisphosphate) + ADP + H(+). The catalysed reaction is 1-octadecanoyl-2-(5Z,8Z,11Z,14Z)-eicosatetraenoyl-sn-glycero-3-phospho-1D-myo-inositol 4,5-bisphosphate + ATP = 1-octadecanoyl-2-(5Z,8Z,11Z,14Z-eicosatetraenoyl)-sn-glycero-3-phospho-(1D-myo-inositol 3,4,5-triphosphate) + ADP + H(+). It functions in the pathway phospholipid metabolism; phosphatidylinositol phosphate biosynthesis. In terms of biological role, phosphoinositide-3-kinase (PI3K) phosphorylates phosphatidylinositol (PI) and its phosphorylated derivatives at position 3 of the inositol ring to produce 3-phosphoinositides. Uses ATP and PtdIns(4,5)P2 (phosphatidylinositol 4,5-bisphosphate) to generate phosphatidylinositol 3,4,5-trisphosphate (PIP3). PIP3 plays a key role by recruiting PH domain-containing proteins to the membrane, including AKT1 and PDPK1, activating signaling cascades involved in cell growth, survival, proliferation, motility and morphology. Participates in cellular signaling in response to various growth factors. Involved in the activation of AKT1 upon stimulation by receptor tyrosine kinases ligands such as EGF, insulin, IGF1, VEGFA and PDGF. Involved in signaling via insulin-receptor substrate (IRS) proteins. Essential in endothelial cell migration during vascular development through VEGFA signaling, possibly by regulating RhoA activity. Required for lymphatic vasculature development, possibly by binding to RAS and by activation by EGF and FGF2, but not by PDGF. Regulates invadopodia formation through the PDPK1-AKT1 pathway. Participates in cardiomyogenesis in embryonic stem cells through a AKT1 pathway. Participates in vasculogenesis in embryonic stem cells through PDK1 and protein kinase C pathway. In addition to its lipid kinase activity, it displays a serine-protein kinase activity that results in the autophosphorylation of the p85alpha regulatory subunit as well as phosphorylation of other proteins such as 4EBP1, H-Ras, the IL-3 beta c receptor and possibly others. Plays a role in the positive regulation of phagocytosis and pinocytosis. The sequence is that of Phosphatidylinositol 4,5-bisphosphate 3-kinase catalytic subunit alpha isoform (PIK3CA) from Homo sapiens (Human).